Reading from the N-terminus, the 515-residue chain is Ent-isokaurene C2/C3-hydroxylase (515 aa).

The helical transmembrane segment at Leu5–Ser25 threads the bilayer. Cys452 is a heme binding site.

The protein belongs to the cytochrome P450 family. It depends on heme as a cofactor.

It is found in the membrane. The catalysed reaction is ent-isokaurene + 2 reduced [NADPH--hemoprotein reductase] + 2 O2 = ent-isokaurene-2beta,3beta-diol + 2 oxidized [NADPH--hemoprotein reductase] + 2 H2O + 2 H(+). Enzyme of the diterpenoid metabolism involved in the biosynthesis of antibacterial oryzalides such as phytocassane. The polypeptide is Ent-isokaurene C2/C3-hydroxylase (CYP71Z6) (Oryza sativa subsp. japonica (Rice)).